Reading from the N-terminus, the 427-residue chain is Putative transporter YdfJ (427 aa).

Over 1-7 (MDFQLYS) the chain is Cytoplasmic. 2 consecutive transmembrane segments (helical) span residues 8–28 (LGAA…AMAL) and 29–49 (ILAM…AFIF). Topologically, residues 50–74 (GKMGDRIGRKKVLFITITMMGICTT) are cytoplasmic. A helical transmembrane segment spans residues 75-95 (LIGVLPTYAQIGVFAPILLVT). At 96-97 (LR) the chain is on the periplasmic side. The helical transmembrane segment at 98–118 (IIQGLGAGAEISGAGTMLAEY) threads the bilayer. Over 119-132 (APKGKRGIISSFVA) the chain is Cytoplasmic. A helical membrane pass occupies residues 133–153 (MGTNCGTLSATAIWAFMFFIL). At 154–157 (SKEE) the chain is on the periplasmic side. A helical transmembrane segment spans residues 158–178 (LLAWGWRIPFLASVVVMVFAI). Residues 179-225 (WLRMNLKESPVFEKVNDSNQPTAKPAPAGSMFQSKSFWLATGLRFGQ) lie on the Cytoplasmic side of the membrane. The chain crosses the membrane as a helical span at residues 226–246 (AGNSGLIQTFLAGYLVQTLLF). Residues 247-251 (NKAIP) are Periplasmic-facing. The helical transmembrane segment at 252 to 272 (TDALMISSILGFMTIPFLGWL) threads the bilayer. Topologically, residues 273 to 279 (SDKIGRR) are cytoplasmic. The helical transmembrane segment at 280–300 (IPYIIMNTSAIVLAWPMLSII) threads the bilayer. The Periplasmic portion of the chain corresponds to 301–307 (VDKSYAP). Residues 308–328 (STIMVALIVIHNCAVLGLFAL) form a helical membrane-spanning segment. The Cytoplasmic portion of the chain corresponds to 329 to 351 (ENITMAEMFGCKNRFTRMAISKE). Residues 352–372 (IGGLIASGFGPILAGIFCTMT) form a helical membrane-spanning segment. Glutamate 373 is a topological domain (periplasmic). A helical transmembrane segment spans residues 374 to 394 (SWYPIAIMIMAYSVIGLISAL). Topologically, residues 395-427 (KMPEVKDRDLSALEDAAEDQPRVVRAAQPSRSL) are cytoplasmic.

Belongs to the major facilitator superfamily. Metabolite:H+ Symporter (MHS) family (TC 2.A.1.6) family.

The protein localises to the cell inner membrane. When overexpressed in human HEK-293 cells forms an inward rectifying potassium channel. The protein is Putative transporter YdfJ (ydfJ) of Escherichia coli (strain K12).